We begin with the raw amino-acid sequence, 215 residues long: Cytochrome b6 (215 aa).

A helical transmembrane segment spans residues I32–F52. A heme c-binding site is contributed by C35. Residues H86 and H100 each contribute to the heme b site. The next 3 helical transmembrane spans lie at A90 to F110, L116 to Y136, and A186 to I206. The heme b site is built by H187 and H202.

This sequence belongs to the cytochrome b family. PetB subfamily. As to quaternary structure, the 4 large subunits of the cytochrome b6-f complex are cytochrome b6, subunit IV (17 kDa polypeptide, PetD), cytochrome f and the Rieske protein, while the 4 small subunits are PetG, PetL, PetM and PetN. The complex functions as a dimer. Heme b is required as a cofactor. It depends on heme c as a cofactor.

The protein resides in the cell inner membrane. Functionally, component of the cytochrome b6-f complex, which mediates electron transfer between photosystem II (PSII) and photosystem I (PSI), cyclic electron flow around PSI, and state transitions. The polypeptide is Cytochrome b6 (Gloeobacter violaceus (strain ATCC 29082 / PCC 7421)).